The primary structure comprises 306 residues: tRNA pseudouridine synthase B (306 aa).

Residue Asp47 is the Nucleophile of the active site.

The protein belongs to the pseudouridine synthase TruB family. Type 1 subfamily.

The enzyme catalyses uridine(55) in tRNA = pseudouridine(55) in tRNA. Its function is as follows. Responsible for synthesis of pseudouridine from uracil-55 in the psi GC loop of transfer RNAs. In Neisseria gonorrhoeae (strain ATCC 700825 / FA 1090), this protein is tRNA pseudouridine synthase B.